The sequence spans 210 residues: 3-hexulose-6-phosphate synthase (210 aa).

Belongs to the HPS/KGPDC family. HPS subfamily.

The enzyme catalyses D-ribulose 5-phosphate + formaldehyde = D-arabino-hex-3-ulose 6-phosphate. It functions in the pathway one-carbon metabolism; formaldehyde assimilation via RuMP pathway; D-fructose 6-phosphate from D-ribulose 5-phosphate and formaldehyde: step 1/2. In terms of biological role, catalyzes the condensation of ribulose 5-phosphate with formaldehyde to form 3-hexulose 6-phosphate. This Staphylococcus epidermidis (strain ATCC 35984 / DSM 28319 / BCRC 17069 / CCUG 31568 / BM 3577 / RP62A) protein is 3-hexulose-6-phosphate synthase.